The following is a 72-amino-acid chain: Large ribosomal subunit protein bL31 (72 aa).

Residues C16, C18, C36, and C39 each contribute to the Zn(2+) site.

This sequence belongs to the bacterial ribosomal protein bL31 family. Type A subfamily. Part of the 50S ribosomal subunit. The cofactor is Zn(2+).

In terms of biological role, binds the 23S rRNA. This is Large ribosomal subunit protein bL31 from Geobacter sp. (strain M21).